Here is a 213-residue protein sequence, read N- to C-terminus: Ribosomal RNA small subunit methyltransferase G (213 aa).

S-adenosyl-L-methionine is bound by residues G55, 105 to 106 (AE), and R124.

It belongs to the methyltransferase superfamily. RNA methyltransferase RsmG family.

The protein resides in the cytoplasm. Specifically methylates the N7 position of a guanine in 16S rRNA. The sequence is that of Ribosomal RNA small subunit methyltransferase G from Fervidobacterium nodosum (strain ATCC 35602 / DSM 5306 / Rt17-B1).